We begin with the raw amino-acid sequence, 479 residues long: Aspartyl/glutamyl-tRNA(Asn/Gln) amidotransferase subunit B (479 aa).

The protein belongs to the GatB/GatE family. GatB subfamily. In terms of assembly, heterotrimer of A, B and C subunits.

It catalyses the reaction L-glutamyl-tRNA(Gln) + L-glutamine + ATP + H2O = L-glutaminyl-tRNA(Gln) + L-glutamate + ADP + phosphate + H(+). The enzyme catalyses L-aspartyl-tRNA(Asn) + L-glutamine + ATP + H2O = L-asparaginyl-tRNA(Asn) + L-glutamate + ADP + phosphate + 2 H(+). Its function is as follows. Allows the formation of correctly charged Asn-tRNA(Asn) or Gln-tRNA(Gln) through the transamidation of misacylated Asp-tRNA(Asn) or Glu-tRNA(Gln) in organisms which lack either or both of asparaginyl-tRNA or glutaminyl-tRNA synthetases. The reaction takes place in the presence of glutamine and ATP through an activated phospho-Asp-tRNA(Asn) or phospho-Glu-tRNA(Gln). This Clostridium beijerinckii (strain ATCC 51743 / NCIMB 8052) (Clostridium acetobutylicum) protein is Aspartyl/glutamyl-tRNA(Asn/Gln) amidotransferase subunit B.